We begin with the raw amino-acid sequence, 350 residues long: Eukaryotic translation initiation factor 3 subunit I (350 aa).

6 WD repeats span residues 8–49 (GHER…GTLE), 51–89 (HQGV…CVFT), 91–135 (ESPS…ESLT), 149–188 (QDGA…AVNS), 198–240 (EKNV…KVYK), and 296–335 (GHFG…FDFY).

The protein belongs to the eIF-3 subunit I family. As to quaternary structure, component of the eukaryotic translation initiation factor 3 (eIF-3) complex.

Its subcellular location is the cytoplasm. Its function is as follows. Component of the eukaryotic translation initiation factor 3 (eIF-3) complex, which is involved in protein synthesis of a specialized repertoire of mRNAs and, together with other initiation factors, stimulates binding of mRNA and methionyl-tRNAi to the 40S ribosome. The eIF-3 complex specifically targets and initiates translation of a subset of mRNAs involved in cell proliferation. This chain is Eukaryotic translation initiation factor 3 subunit I, found in Scheffersomyces stipitis (strain ATCC 58785 / CBS 6054 / NBRC 10063 / NRRL Y-11545) (Yeast).